The following is a 508-amino-acid chain: Tyrosine decarboxylase 4 (508 aa).

Residue K318 is modified to N6-(pyridoxal phosphate)lysine.

This sequence belongs to the group II decarboxylase family. Homodimer. Requires pyridoxal 5'-phosphate as cofactor.

It carries out the reaction L-tyrosine + H(+) = tyramine + CO2. This chain is Tyrosine decarboxylase 4 (TYRDC-4), found in Petroselinum crispum (Parsley).